Reading from the N-terminus, the 346-residue chain is Heparan sulfate glucosamine 3-O-sulfotransferase 5 (346 aa).

At 1–12 (MLFKQQVWLRQK) the chain is on the cytoplasmic side. Residues 13–32 (LLVLGSLAVGSLLYLVARVG) form a helical; Signal-anchor for type II membrane protein membrane-spanning segment. The Lumenal portion of the chain corresponds to 33-346 (SLDRLQPICP…QITGRTLNWP (314 aa)). N75 is a glycosylation site (N-linked (GlcNAc...) asparagine). A 3'-phosphoadenylyl sulfate-binding site is contributed by 100–104 (KGGTR). Substrate is bound by residues 122–128 (EIHFFDN) and 155–158 (KSPA). N-linked (GlcNAc...) asparagine glycosylation is present at N173. 3'-phosphoadenylyl sulfate is bound by residues R183 and S191. A glycan (N-linked (GlcNAc...) asparagine) is linked at N204. Position 226-227 (226-227 (YK)) interacts with substrate. N-linked (GlcNAc...) asparagine glycosylation is present at N287. Y293 lines the 3'-phosphoadenylyl sulfate pocket. C294 and C304 form a disulfide bridge. Residue 309-313 (KGRIH) participates in 3'-phosphoadenylyl sulfate binding.

It belongs to the sulfotransferase 1 family.

It is found in the golgi apparatus membrane. The catalysed reaction is alpha-D-glucosaminyl-[heparan sulfate](n) + 3'-phosphoadenylyl sulfate = 3-sulfo-alpha-D-glucosaminyl-[heparan sulfate](n) + adenosine 3',5'-bisphosphate + H(+). Functionally, sulfotransferase that utilizes 3'-phospho-5'-adenylyl sulfate (PAPS) to catalyze the transfer of a sulfo group to position 3 of glucosamine residues in heparan. Catalyzes the rate limiting step in the biosynthesis of heparan sulfate (HSact). This modification is a crucial step in the biosynthesis of anticoagulant heparan sulfate as it completes the structure of the antithrombin pentasaccharide binding site. Also generates GlcUA-GlcNS or IdoUA-GlcNS and IdoUA2S-GlcNH2. The sequence is that of Heparan sulfate glucosamine 3-O-sulfotransferase 5 (Hs3st5) from Mus musculus (Mouse).